The primary structure comprises 560 residues: DNA ligase B (560 aa).

The active-site N6-AMP-lysine intermediate is the lysine 124.

The protein belongs to the NAD-dependent DNA ligase family. LigB subfamily.

It catalyses the reaction NAD(+) + (deoxyribonucleotide)n-3'-hydroxyl + 5'-phospho-(deoxyribonucleotide)m = (deoxyribonucleotide)n+m + AMP + beta-nicotinamide D-nucleotide.. Functionally, catalyzes the formation of phosphodiester linkages between 5'-phosphoryl and 3'-hydroxyl groups in double-stranded DNA using NAD as a coenzyme and as the energy source for the reaction. This Escherichia coli O17:K52:H18 (strain UMN026 / ExPEC) protein is DNA ligase B.